The primary structure comprises 440 residues: MASLTVKAYLLGKEDAAREIRRFSFCCSPEPEAEAEAAAGPGPCERLLSRVAALFPALRPGGFQAHYRDEDGDLVAFSSDEELTMAMSYVKDDIFRIYIKEKKECRRDHRPPCAQEAPRNMVHPNVICDGCNGPVVGTRYKCSVCPDYDLCSVCEGKGLHRGHTKLAFPSPFGHLSEGFSHSRWLRKVKHGHFGWPGWEMGPPGNWSPRPPRAGEARPGPTAESASGPSEDPSVNFLKNVGESVAAALSPLGIEVDIDVEHGGKRSRLTPVSPESSSTEEKSSSQPSSCCSDPSKPGGNVEGATQSLAEQMRKIALESEGRPEEQMESDNCSGGDDDWTHLSSKEVDPSTGELQSLQMPESEGPSSLDPSQEGPTGLKEAALYPHLPPEADPRLIESLSQMLSMGFSDEGGWLTRLLQTKNYDIGAALDTIQYSKHPPPL.

A2 bears the N-acetylalanine mark. An interaction with LCK region spans residues 2 to 50 (ASLTVKAYLLGKEDAAREIRRFSFCCSPEPEAEAEAAAGPGPCERLLSR). In terms of domain architecture, PB1 spans 3 to 102 (SLTVKAYLLG…DIFRIYIKEK (100 aa)). S24 bears the Phosphoserine mark. The interval 43 to 107 (PCERLLSRVA…YIKEKKECRR (65 aa)) is interaction with PRKCZ and dimerization. Residues 50-80 (RVAALFPALRPGGFQAHYRDEDGDLVAFSSD) form an interaction with PAWR region. K91 participates in a covalent cross-link: Glycyl lysine isopeptide (Lys-Gly) (interchain with G-Cter in ubiquitin). An interaction with GABRR3 region spans residues 122 to 224 (VHPNVICDGC…EARPGPTAES (103 aa)). Residues 123–173 (HPNVICDGCNGPVVGTRYKCSVCPDYDLCSVCEGKGLHRGHTKLAFPSPFG) form a ZZ-type zinc finger. Residues C128, C131, C142, and C145 each coordinate Zn(2+). Phosphotyrosine is present on Y148. Zn(2+) contacts are provided by C151, C154, H160, and H163. 2 positions are modified to phosphoserine: S170 and S176. The LIM protein-binding (LB) stretch occupies residues 170–220 (SPFGHLSEGFSHSRWLRKVKHGHFGWPGWEMGPPGNWSPRPPRAGEARPGP). A Glycyl lysine isopeptide (Lys-Gly) (interchain with G-Cter in ubiquitin) cross-link involves residue K189. Positions 196–235 (PGWEMGPPGNWSPRPPRAGEARPGPTAESASGPSEDPSVN) are disordered. A phosphoserine mark is found at S207, S233, S249, and S266. The short motif at 228–233 (PSEDPS) is the TRAF6-binding element. The tract at residues 264–390 (KRSRLTPVSP…ALYPHLPPEA (127 aa)) is disordered. Phosphothreonine is present on T269. An interaction with NTRK1 region spans residues 269-440 (TPVSPESSST…IQYSKHPPPL (172 aa)). Residues S272 and S282 each carry the phosphoserine modification. Residues 283-296 (SSQPSSCCSDPSKP) show a composition bias toward low complexity. 2 S-palmitoyl cysteine lipidation sites follow: C289 and C290. Phosphoserine is present on S306. Residues 310 to 324 (QMRKIALESEGRPEE) show a composition bias toward basic and acidic residues. The tract at residues 321 to 342 (RPEEQMESDNCSGGDDDWTHLS) is MAP1LC3B-binding. Phosphoserine is present on residues S328 and S332. An LIR motif is present at residues 336–341 (DDWTHL). Basic and acidic residues predominate over residues 337–347 (DWTHLSSKEVD). The tract at residues 347–352 (DPSTGE) is interaction with KEAP1. At S349 the chain carries Phosphoserine; by ULK1. Polar residues predominate over residues 351-373 (GELQSLQMPESEGPSSLDPSQEG). 4 positions are modified to phosphoserine: S355, S361, S365, and S366. The region spanning 389 to 434 (EADPRLIESLSQMLSMGFSDEGGWLTRLLQTKNYDIGAALDTIQYS) is the UBA domain. Phosphoserine; by CK2, ULK1 and TBK1 is present on S403. Position 407 is a phosphoserine; by ULK1 (S407). K420 and K435 each carry N6-acetyllysine; alternate. K420 is covalently cross-linked (Glycyl lysine isopeptide (Lys-Gly) (interchain with G-Cter in ubiquitin); alternate). Residue K435 forms a Glycyl lysine isopeptide (Lys-Gly) (interchain with G-Cter in SUMO2); alternate linkage.

Homooligomer or heterooligomer; may form homotypic arrays. Dimerization interferes with ubiquitin binding. Component of a ternary complex with PAWR and PRKCZ. Forms a complex with JUB/Ajuba, PRKCZ and TRAF6. Identified in a complex with TRAF6 and CYLD. Identified in a heterotrimeric complex with ubiquitin and ZFAND5, where ZFAND5 and SQSTM1 both interact with the same ubiquitin molecule. Interacts (via LIR motif) with MAP1LC3A and MAP1LC3B, as well as with other ATG8 family members, including GABARAP, GABARAPL1 and GABARAPL2; these interactions are necessary for the recruitment MAP1 LC3 family members to inclusion bodies containing polyubiquitinated protein aggregates and for their degradation by autophagy. Interacts directly with PRKCI and PRKCZ. Interacts with EBI3, LCK, RASA1, NR2F2, NTRK1, NTRK2, NTRK3, NBR1, MAP2K5 and MAPKAPK5. Upon TNF-alpha stimulation, interacts with RIPK1 probably bridging IKBKB to the TNF-R1 complex composed of TNF-R1/TNFRSF1A, TRADD and RIPK1. Interacts with the proteasome subunits PSMD4 and PSMC2. Interacts with TRAF6. Interacts with 'Lys-63'-linked polyubiquitinated MAPT/TAU. Interacts with FHOD3. Interacts with CYLD. Interacts with SESN1. Interacts with SESN2. Interacts with ULK1. Interacts with UBD. Interacts with WDR81; the interaction is direct and regulates the interaction of SQSTM1 with ubiquitinated proteins. Interacts with WDFY3; this interaction is required to recruit WDFY3 to cytoplasmic bodies and to PML bodies. Interacts with LRRC25. Interacts with STING1; leading to relocalization of STING1 to autophagosomes. Interacts (when phosphorylated at Ser-349) with KEAP1; the interaction is direct and inactivates the BCR(KEAP1) complex by sequestering KEAP1 in inclusion bodies, promoting its degradation. Interacts with MOAP1; promoting dissociation of SQSTM1 inclusion bodies that sequester KEAP1. Interacts with GBP1. Interacts with TAX1BP1. Interacts with (ubiquitinated) PEX5; specifically binds PEX5 ubiquitinated at 'Lys-209' in response to reactive oxygen species (ROS). Interacts (via PB1 domain) with TNS2; the interaction leads to sequestration of TNS2 in cytoplasmic aggregates with SQSTM1 and promotes TNS2 ubiquitination and proteasomal degradation. Interacts with IRS1; the interaction is disrupted by the presence of tensin TNS2. Interacts with TRIM5. Interacts with TRIM11 (when ubiquitinated); promoting AIM2 recruitment to autophagosomes and autophagy-dependent degradation of AIM2. Interacts with TRIM13. Interacts with TRIM16. Interacts with TRIM23. Interacts with TRIM50. Interacts with TRIM55. Interacts with ECSIT; this interaction inhibits TLR4 signaling via functional regulation of the TRAF6-ECSIT complex. Interacts with GABRR1, GABRR2 and GABRR3. Interacts with WDR83. Interacts with GRB2. Interacts with USP12; the interaction is independent of USP12 deubiquitinase activity and may be involved in regulation of autophagic flux. Interacts with ASB6. Post-translationally, phosphorylation at Ser-407 by ULK1 destabilizes the UBA dimer interface and increases binding affinity to ubiquitinated proteins. Phosphorylation at Ser-407 also primes for subsequent phosphorylation at Ser-403. Phosphorylation at Ser-403 by CK2 or ULK1 promotes binding to ubiquitinated proteins by increasing the affinity between the UBA domain and polyubiquitin chains. Phosphorylation at Ser-403 by ULK1 is stimulated by SESN2. Phosphorylated at Ser-403 by TBK1, leading to promote relocalization of 'Lys-63'-linked ubiquitinated STING1 to autophagosomes. Phosphorylation at Ser-349 by ULK1 promotes interaction with KEAP1 and inactivation of the BCR(KEAP1) complex, promoting NFE2L2/NRF2 nuclear accumulation and expression of phase II detoxifying enzymes. Phosphorylated in vitro by TTN. In terms of processing, ubiquitinated by UBE2J1 and RNF26 at Lys-435: ubiquitinated SQSTM1 attracts specific vesicle-associated adapters, forming a molecular bridge that restrains cognate vesicles in the perinuclear region and organizes the endosomal pathway for efficient cargo transport. Ubiquitination by UBE2D2 and UBE2D3 increases its ability to bind polyubiquitin chains by destabilizing the UBA dimer interface. Deubiquitination by USP15 releases target vesicles for fast transport into the cell periphery. Ubiquitinated by the BCR(KEAP1) complex at Lys-420, increasing SQSTM1 sequestering activity and promoting its degradation. Ubiquitinated via 'Lys-29' and 'Lys-33'-linked polyubiquitination leading to xenophagic targeting of bacteria and inhibition of their replication. Acetylated at Lys-420 and Lys-435 by KAT5/TIP60, promotes activity by destabilizing the UBA dimer interface and increases binding affinity to ubiquitinated proteins. Deacetylated by HDAC6. Post-translationally, palmitoylation at Cys-289 and Cys-290 by ZDHHC19 is required for efficient autophagic degradation of SQSTM1-cargo complexes by promoting affinity for ATG8 proteins and recruitment of p62 bodies to autophagosomes. Dealmitoylated at Cys-289 and Cys-290 by LYPLA1. In terms of processing, (Microbial infection) Cleaved by S.pyogenes SpeB protease; leading to its degradation. Degradation by SpeB prevents autophagy, promoting to S.pyogenes intracellular replication. (Microbial infection) Deubiquitinated by Epstein-Barr virus BPLF1; leading to inhibition of the recruitment of MAP1LC3A/LC3 to SQSTM1-positive structures. As to expression, ubiquitously expressed.

Its subcellular location is the cytoplasmic vesicle. The protein localises to the autophagosome. It is found in the preautophagosomal structure. The protein resides in the cytoplasm. It localises to the cytosol. Its subcellular location is the nucleus. The protein localises to the PML body. It is found in the late endosome. The protein resides in the lysosome. It localises to the endoplasmic reticulum. Its subcellular location is the myofibril. The protein localises to the sarcomere. Molecular adapter required for selective macroautophagy (aggrephagy) by acting as a bridge between polyubiquitinated proteins and autophagosomes. Promotes the recruitment of ubiquitinated cargo proteins to autophagosomes via multiple domains that bridge proteins and organelles in different steps. SQSTM1 first mediates the assembly and removal of ubiquitinated proteins by undergoing liquid-liquid phase separation upon binding to ubiquitinated proteins via its UBA domain, leading to the formation of insoluble cytoplasmic inclusions, known as p62 bodies. SQSTM1 then interacts with ATG8 family proteins on autophagosomes via its LIR motif, leading to p62 body recruitment to autophagosomes, followed by autophagic clearance of ubiquitinated proteins. SQSTM1 is itself degraded along with its ubiquitinated cargos. Also required to recruit ubiquitinated proteins to PML bodies in the nucleus. Also involved in autophagy of peroxisomes (pexophagy) in response to reactive oxygen species (ROS) by acting as a bridge between ubiquitinated PEX5 receptor and autophagosomes. Acts as an activator of the NFE2L2/NRF2 pathway via interaction with KEAP1: interaction inactivates the BCR(KEAP1) complex by sequestering the complex in inclusion bodies, promoting nuclear accumulation of NFE2L2/NRF2 and subsequent expression of cytoprotective genes. Promotes relocalization of 'Lys-63'-linked ubiquitinated STING1 to autophagosomes. Involved in endosome organization by retaining vesicles in the perinuclear cloud: following ubiquitination by RNF26, attracts specific vesicle-associated adapters, forming a molecular bridge that restrains cognate vesicles in the perinuclear region and organizes the endosomal pathway for efficient cargo transport. Sequesters tensin TNS2 into cytoplasmic puncta, promoting TNS2 ubiquitination and proteasomal degradation. May regulate the activation of NFKB1 by TNF-alpha, nerve growth factor (NGF) and interleukin-1. May play a role in titin/TTN downstream signaling in muscle cells. Adapter that mediates the interaction between TRAF6 and CYLD. The chain is Sequestosome-1 from Homo sapiens (Human).